The primary structure comprises 476 residues: Bifunctional protein HldE (476 aa).

Positions 1–319 (MKVSLPAFEK…EALALHHGES (319 aa)) are ribokinase. Position 195 to 198 (195 to 198 (NMSE)) interacts with ATP. Aspartate 264 is an active-site residue. A cytidylyltransferase region spans residues 345–476 (MTNGCFDILH…AIIQNIMANQ (132 aa)).

In the N-terminal section; belongs to the carbohydrate kinase PfkB family. It in the C-terminal section; belongs to the cytidylyltransferase family. As to quaternary structure, homodimer.

The enzyme catalyses D-glycero-beta-D-manno-heptose 7-phosphate + ATP = D-glycero-beta-D-manno-heptose 1,7-bisphosphate + ADP + H(+). The catalysed reaction is D-glycero-beta-D-manno-heptose 1-phosphate + ATP + H(+) = ADP-D-glycero-beta-D-manno-heptose + diphosphate. It functions in the pathway nucleotide-sugar biosynthesis; ADP-L-glycero-beta-D-manno-heptose biosynthesis; ADP-L-glycero-beta-D-manno-heptose from D-glycero-beta-D-manno-heptose 7-phosphate: step 1/4. The protein operates within nucleotide-sugar biosynthesis; ADP-L-glycero-beta-D-manno-heptose biosynthesis; ADP-L-glycero-beta-D-manno-heptose from D-glycero-beta-D-manno-heptose 7-phosphate: step 3/4. Its function is as follows. Catalyzes the phosphorylation of D-glycero-D-manno-heptose 7-phosphate at the C-1 position to selectively form D-glycero-beta-D-manno-heptose-1,7-bisphosphate. In terms of biological role, catalyzes the ADP transfer from ATP to D-glycero-beta-D-manno-heptose 1-phosphate, yielding ADP-D-glycero-beta-D-manno-heptose. In Shewanella putrefaciens (strain CN-32 / ATCC BAA-453), this protein is Bifunctional protein HldE.